The following is a 712-amino-acid chain: Anaerobic ribonucleoside-triphosphate reductase (712 aa).

Positions 3 to 92 (PHVMKRDGCK…EYRHDRDIER (90 aa)) constitute an ATP-cone domain. In terms of domain architecture, Glycine radical spans 583 to 708 (KKVNPYDKID…VKRRVKHLGN (126 aa)). Residues Cys-644, Cys-647, Cys-662, and Cys-665 each coordinate Zn(2+). Gly-681 is modified (glycine radical).

This sequence belongs to the anaerobic ribonucleoside-triphosphate reductase family. As to quaternary structure, homodimer. Forms a tetramer composed of two NrdD and two NrdG subunits.

The enzyme catalyses a ribonucleoside 5'-triphosphate + formate + H(+) = a 2'-deoxyribonucleoside 5'-triphosphate + CO2 + H2O. The catalysed reaction is formate + ATP + H(+) = dATP + CO2 + H2O. It catalyses the reaction CTP + formate + H(+) = dCTP + CO2 + H2O. It carries out the reaction GTP + formate + H(+) = dGTP + CO2 + H2O. The enzyme catalyses UTP + formate + H(+) = dUTP + CO2 + H2O. With respect to regulation, activated under anaerobic conditions by NrdG, a tightly associated activase. Activation involves the formation of a glycyl radical at Gly-681. Exposure of the activated reductase to oxygen leads to C-terminal truncation and inactivation of the protein, by cleavage at the N-terminal side of Gly-681. The presence of zinc protects the protein from proteolysis and prevents the formation of disulfide bridges within it. The enzyme shows a basal activity in the absence of any effector, but reduction is stimulated up to 10-fold by an appropriate modulator (dGTP for ATP reduction, ATP for CTP and UTP reduction, and dTTP for GTP reduction). dGTP and dTTP inhibit the reduction of the incorrect substrate, and dATP inhibits reduction of all four. These modulators act as allosteric effectors. In terms of biological role, catalyzes the conversion of ribonucleotides into deoxyribonucleotides, which are required for DNA synthesis and repair. Can reduce each of the four common ribonucleoside triphosphates. The chain is Anaerobic ribonucleoside-triphosphate reductase from Escherichia coli (strain K12).